A 475-amino-acid polypeptide reads, in one-letter code: U3 small nucleolar RNA-interacting protein 2 (475 aa).

The tract at residues 1-75 (MSATAAARKR…EEEEELEETA (75 aa)) is disordered. A Nuclear localization signal motif is present at residues 8-40 (RKRGKPASGAGAGAGAGKRRRKADSAGDRGKSK). Arg-10 is subject to Omega-N-methylarginine. 2 positions are modified to N6-acetyllysine: Lys-12 and Lys-25. A phosphoserine mark is found at Ser-50, Ser-51, Ser-53, and Ser-57. Residues 65–74 (EEEEEELEET) show a composition bias toward acidic residues. Lys-113 is covalently cross-linked (Glycyl lysine isopeptide (Lys-Gly) (interchain with G-Cter in SUMO2)). 7 WD repeats span residues 144–183 (GHQLSITCLVVTPDDSAIFSAAKDCSIIKWSVESGRKLHV), 197–236 (GHSSHVLCMAISSDGKYLASGDRSKLILIWEAQSCQHLYT), 239–278 (GHRDAVSGLAFRRGTHQLYSTSHDRSVKVWNVAENSYVET), 281–320 (GHQDAVAALDALSRECCVTAGGRDGTVRVWKIPEESQLVF), 322–360 (GHQGSIDCIHLINEEHMVSGADDGSVALWGLSKKRPLAL), 374–413 (EQPFWISSVAALLNTDLVATGSHSSCVRLWQCGEGFRQLD), and 419–460 (PLVG…NSVC).

The protein belongs to the WD repeat RRP9 family. In terms of assembly, interacts specifically with the U3 small nucleolar RNA (U3 snoRNA). Binds a sub-fragment of the U3 snoRNA surrounding the B/C motif (3UBC). This association with the U3BC RNA is dependent on the binding of a protein called 15.5K to the box B/C motif. The association of the protein with the U3BC RNA was found to be also dependent on a conserved RNA structure that flanks the box B/C motif. Part of the small subunit (SSU) processome, composed of more than 70 proteins and the RNA chaperone small nucleolar RNA (snoRNA) U3. Acetylation at Lys-12 and Lys-25 by KAT2B/PCAF under stress impairs pre-rRNA processing. Deacetylation by SIRT7 enhances RRP9-binding to U3 snoRNA, which is a prerequisite for pre-rRNA processing.

The protein localises to the nucleus. It is found in the nucleolus. Component of a nucleolar small nuclear ribonucleoprotein particle (snoRNP) thought to participate in the processing and modification of pre-ribosomal RNA (pre-rRNA). Part of the small subunit (SSU) processome, first precursor of the small eukaryotic ribosomal subunit. During the assembly of the SSU processome in the nucleolus, many ribosome biogenesis factors, an RNA chaperone and ribosomal proteins associate with the nascent pre-rRNA and work in concert to generate RNA folding, modifications, rearrangements and cleavage as well as targeted degradation of pre-ribosomal RNA by the RNA exosome. This Homo sapiens (Human) protein is U3 small nucleolar RNA-interacting protein 2.